The sequence spans 106 residues: Trp operon repressor homolog (106 aa).

Residues 59-82 (QREIQQILNTSAATITRGSNMIKI) mediate DNA binding.

The protein belongs to the TrpR family. In terms of assembly, homodimer.

The protein resides in the cytoplasm. Its function is as follows. This protein is an aporepressor. When complexed with L-tryptophan it binds the operator region of the trp operon and prevents the initiation of transcription. The polypeptide is Trp operon repressor homolog (Histophilus somni (strain 2336) (Haemophilus somnus)).